We begin with the raw amino-acid sequence, 288 residues long: MKLAVYGKGGIGKSTTSCNISVALAKRGKKVLQIGCDPKHDSTFTLTGFLIPTIIDTLQEKDYHYEDVWPEDVIYKGYGGVDCVEAGGPPAGAGCGGYVVGETVKLLKELNAFDEYDVILFDVLGDVVCGGFAAPLNYADYCLIVTDNGFDALFAANRIAASVREKARTHPLRLAGLIGNRTSKRDLIEKYIEAVPMPVLEVLPLIEDIRVSRVKGKTLFEMAEQDPSLDYVCDYYLNIADQILARPEGVVPNDTPDRELFSLLSDFYLNPGKPQVPNSEEELDLMIV.

Residues 10–15 (GIGKST) and lysine 39 contribute to the ATP site. Serine 14 is a binding site for Mg(2+). Positions 95 and 129 each coordinate [4Fe-4S] cluster. Residue 180-181 (NR) participates in ATP binding.

This sequence belongs to the NifH/BchL/ChlL family. Homodimer. Protochlorophyllide reductase is composed of three subunits; ChlL, ChlN and ChlB. Requires [4Fe-4S] cluster as cofactor.

The enzyme catalyses chlorophyllide a + oxidized 2[4Fe-4S]-[ferredoxin] + 2 ADP + 2 phosphate = protochlorophyllide a + reduced 2[4Fe-4S]-[ferredoxin] + 2 ATP + 2 H2O. It participates in porphyrin-containing compound metabolism; chlorophyll biosynthesis (light-independent). In terms of biological role, component of the dark-operative protochlorophyllide reductase (DPOR) that uses Mg-ATP and reduced ferredoxin to reduce ring D of protochlorophyllide (Pchlide) to form chlorophyllide a (Chlide). This reaction is light-independent. The L component serves as a unique electron donor to the NB-component of the complex, and binds Mg-ATP. This is Light-independent protochlorophyllide reductase iron-sulfur ATP-binding protein from Nostoc punctiforme (strain ATCC 29133 / PCC 73102).